The sequence spans 451 residues: Enolase (451 aa).

Gln-167 is a binding site for (2R)-2-phosphoglycerate. The active-site Proton donor is Glu-209. Residues Asp-250, Glu-307, and Asp-334 each coordinate Mg(2+). Residues Lys-359, Arg-388, Ser-389, and Lys-410 each contribute to the (2R)-2-phosphoglycerate site. The active-site Proton acceptor is the Lys-359.

This sequence belongs to the enolase family. The cofactor is Mg(2+).

It is found in the cytoplasm. It localises to the secreted. The protein resides in the cell surface. The catalysed reaction is (2R)-2-phosphoglycerate = phosphoenolpyruvate + H2O. Its pathway is carbohydrate degradation; glycolysis; pyruvate from D-glyceraldehyde 3-phosphate: step 4/5. Functionally, catalyzes the reversible conversion of 2-phosphoglycerate (2-PG) into phosphoenolpyruvate (PEP). It is essential for the degradation of carbohydrates via glycolysis. The sequence is that of Enolase from Mesomycoplasma hyopneumoniae (strain J / ATCC 25934 / NCTC 10110) (Mycoplasma hyopneumoniae).